Reading from the N-terminus, the 350-residue chain is Phosphoribosylformylglycinamidine cyclo-ligase (350 aa).

The protein belongs to the AIR synthase family.

Its subcellular location is the cytoplasm. The enzyme catalyses 2-formamido-N(1)-(5-O-phospho-beta-D-ribosyl)acetamidine + ATP = 5-amino-1-(5-phospho-beta-D-ribosyl)imidazole + ADP + phosphate + H(+). The protein operates within purine metabolism; IMP biosynthesis via de novo pathway; 5-amino-1-(5-phospho-D-ribosyl)imidazole from N(2)-formyl-N(1)-(5-phospho-D-ribosyl)glycinamide: step 2/2. The polypeptide is Phosphoribosylformylglycinamidine cyclo-ligase (Cupriavidus pinatubonensis (strain JMP 134 / LMG 1197) (Cupriavidus necator (strain JMP 134))).